A 217-amino-acid chain; its full sequence is Putative cobalt transport protein CbiM (217 aa).

The next 6 helical transmembrane spans lie at 8-28 (LPPE…VYGA), 44-64 (LIAV…PSVT), 74-94 (GIAV…IVLL), 107-127 (TLGA…WIAF), 139-161 (VFAA…LALA), and 181-201 (IFAV…VMLV).

Belongs to the CbiM family. As to quaternary structure, forms an energy-coupling factor (ECF) transporter complex composed of an ATP-binding protein (A component, CbiO), a transmembrane protein (T component, CbiQ) and 2 possible substrate-capture proteins (S components, CbiM and CbiN) of unknown stoichimetry.

It is found in the cell membrane. Its pathway is cofactor biosynthesis; adenosylcobalamin biosynthesis. Part of the energy-coupling factor (ECF) transporter complex CbiMNOQ involved in cobalt import. The sequence is that of Putative cobalt transport protein CbiM from Archaeoglobus fulgidus (strain ATCC 49558 / DSM 4304 / JCM 9628 / NBRC 100126 / VC-16).